A 269-amino-acid polypeptide reads, in one-letter code: Ribosomal RNA small subunit methyltransferase A (269 aa).

6 residues coordinate S-adenosyl-L-methionine: N18, L20, G45, E66, D91, and N112.

The protein belongs to the class I-like SAM-binding methyltransferase superfamily. rRNA adenine N(6)-methyltransferase family. RsmA subfamily.

It is found in the cytoplasm. It carries out the reaction adenosine(1518)/adenosine(1519) in 16S rRNA + 4 S-adenosyl-L-methionine = N(6)-dimethyladenosine(1518)/N(6)-dimethyladenosine(1519) in 16S rRNA + 4 S-adenosyl-L-homocysteine + 4 H(+). Its function is as follows. Specifically dimethylates two adjacent adenosines (A1518 and A1519) in the loop of a conserved hairpin near the 3'-end of 16S rRNA in the 30S particle. May play a critical role in biogenesis of 30S subunits. The sequence is that of Ribosomal RNA small subunit methyltransferase A from Vibrio parahaemolyticus serotype O3:K6 (strain RIMD 2210633).